The sequence spans 391 residues: MKIVLAYSGGLDTTVAIKWLSETFHAEVISVSVDVGQKDDFKKIEERAYKAGSAKHYLVDAKREFAENFALKDIKMNGLYEEVYPLATALARPLIAEKVAEVAKKEGTEYVAHGSTSKGNDQVRFDLALKTALDNVKIIAPARIWKMTREDEIAYARERGIPIKTESSKYSIDENLWGRSIEGDIISDPASEVPEDAFEWTAVRKQDKLKLSVEFEKGVPVRVNGEKLDPVKLISLLNEEVGSRGFGRVEHLENRVVGFKSREVYEAPAALALIAAHKDLEKTVLTPLELRFKRHLDSLWSDLVYQGLWYEPLRNTLELAGDEINKWVSGEVKLEVDLKSLRVVGRTSPYSPYSEKISSYNKGWYPSDEEARGFIEIWGMHSLLTRKARYG.

6–14 lines the ATP pocket; it reads AYSGGLDTT. Residue Y84 participates in L-citrulline binding. Residue G114 participates in ATP binding. Residues T116, N120, and D121 each contribute to the L-aspartate site. N120 lines the L-citrulline pocket. The L-citrulline site is built by R124, S171, S180, E253, and Y265.

Belongs to the argininosuccinate synthase family. Type 1 subfamily. As to quaternary structure, homotetramer.

Its subcellular location is the cytoplasm. The catalysed reaction is L-citrulline + L-aspartate + ATP = 2-(N(omega)-L-arginino)succinate + AMP + diphosphate + H(+). Its pathway is amino-acid biosynthesis; L-arginine biosynthesis; L-arginine from L-ornithine and carbamoyl phosphate: step 2/3. This Metallosphaera sedula (strain ATCC 51363 / DSM 5348 / JCM 9185 / NBRC 15509 / TH2) protein is Argininosuccinate synthase.